The primary structure comprises 183 residues: MSQARFIAFSDGSALVNPGGPGGTGFVVLDRARPAYRFGGTRWVEDGPNAVTNNRMELRAVLEALEGLPGGEQVEVISDSRYVVDALSRWIHGWRKKGWRTASGEPVLNRDLIEALDARASALTVRYTWVRGHDGHAVNEVVDQLAQAAARGVAGPGEAEVVAALRAEAFLAGGSAAPRSSRA.

In terms of domain architecture, RNase H type-1 spans 2 to 151; that stretch reads SQARFIAFSD…VDQLAQAAAR (150 aa). The Mg(2+) site is built by D11, E57, D79, and D143.

It belongs to the RNase H family. In terms of assembly, monomer. Requires Mg(2+) as cofactor.

The protein localises to the cytoplasm. The catalysed reaction is Endonucleolytic cleavage to 5'-phosphomonoester.. In terms of biological role, endonuclease that specifically degrades the RNA of RNA-DNA hybrids. The protein is Ribonuclease H of Anaeromyxobacter dehalogenans (strain 2CP-1 / ATCC BAA-258).